Consider the following 143-residue polypeptide: Peptide methionine sulfoxide reductase MsrB (143 aa).

The region spanning 16–139 is the MsrB domain; the sequence is DAELRRRLTP…NSAALNFESR (124 aa). Residues C55, C58, C104, and C107 each coordinate Zn(2+). C128 acts as the Nucleophile in catalysis.

It belongs to the MsrB Met sulfoxide reductase family. The cofactor is Zn(2+).

It catalyses the reaction L-methionyl-[protein] + [thioredoxin]-disulfide + H2O = L-methionyl-(R)-S-oxide-[protein] + [thioredoxin]-dithiol. The chain is Peptide methionine sulfoxide reductase MsrB from Burkholderia vietnamiensis (strain G4 / LMG 22486) (Burkholderia cepacia (strain R1808)).